A 603-amino-acid polypeptide reads, in one-letter code: Phosphoenolpyruvate carboxykinase [GTP] (603 aa).

Residues Arg-87 and 209–211 (YAG) contribute to the substrate site. Residues Lys-218 and His-237 each coordinate Mn(2+). Ser-258 contributes to the substrate binding site. 259-264 (GSGKTS) is a binding site for GTP. Residue Ser-260 is part of the active site. Asp-275 lines the Mn(2+) pocket. 365–367 (NAR) contacts substrate. Residues Arg-367 and Arg-398 each coordinate GTP.

This sequence belongs to the phosphoenolpyruvate carboxykinase [GTP] family. Mn(2+) serves as cofactor.

The protein localises to the cytoplasm. The enzyme catalyses oxaloacetate + GTP = phosphoenolpyruvate + GDP + CO2. It functions in the pathway carbohydrate biosynthesis; gluconeogenesis. In terms of biological role, catalyzes the conversion of oxaloacetate (OAA) to phosphoenolpyruvate (PEP), the rate-limiting step in the metabolic pathway that produces glucose from lactate and other precursors derived from the citric acid cycle. This is Phosphoenolpyruvate carboxykinase [GTP] from Saccharolobus solfataricus (strain ATCC 35092 / DSM 1617 / JCM 11322 / P2) (Sulfolobus solfataricus).